A 270-amino-acid polypeptide reads, in one-letter code: Interleukin-1 alpha (270 aa).

A propeptide spanning residues 1–114 (MAKVPDLFED…HDLEETIQPR (114 aa)) is cleaved from the precursor. N-linked (GlcNAc...) asparagine glycosylation occurs at Asn46. Position 85 is an N6-acetyllysine (Lys85). The tract at residues 85-89 (KKRRL) is nuclear localization signal (NLS). The residue at position 90 (Ser90) is a Phosphoserine. Asn139 is a glycosylation site (N-linked (GlcNAc...) asparagine).

It belongs to the IL-1 family. Monomer. Interacts with TMED10; the interaction mediates the translocation from the cytoplasm into the ERGIC (endoplasmic reticulum-Golgi intermediate compartment) and thereby secretion. Interacts with IL1R1. Interacts with S100A13; this interaction is the first step in the export of IL1A, followed by direct translocation of this complex across the plasma membrane. Acetylated within its nuclear localization sequence, which impacts subcellular localization. Post-translationally, proteolytic processed by CAPN1 in a calcium-dependent manner. Cleavage from 31 kDa precursor to 18 kDa biologically active molecules. In terms of processing, phosphorylated. Phosphorylation greatly enhances susceptibility to digestion and promotes the conversion of pre-IL1A alpha to the biologically active IL1A.

The protein resides in the nucleus. Its subcellular location is the cytoplasm. The protein localises to the secreted. In terms of biological role, cytokine constitutively present intracellularly in nearly all resting non-hematopoietic cells that plays an important role in inflammation and bridges the innate and adaptive immune systems. After binding to its receptor IL1R1 together with its accessory protein IL1RAP, forms the high affinity interleukin-1 receptor complex. Signaling involves the recruitment of adapter molecules such as MYD88, IRAK1 or IRAK4. In turn, mediates the activation of NF-kappa-B and the three MAPK pathways p38, p42/p44 and JNK pathways. Within the cell, acts as an alarmin and cell death results in its liberation in the extracellular space after disruption of the cell membrane to induce inflammation and alert the host to injury or damage. In addition to its role as a danger signal, which occurs when the cytokine is passively released by cell necrosis, directly senses DNA damage and acts as signal for genotoxic stress without loss of cell integrity. This chain is Interleukin-1 alpha, found in Rattus norvegicus (Rat).